A 348-amino-acid chain; its full sequence is Sec-independent protein translocase protein TatC (348 aa).

The next 6 helical transmembrane spans lie at 7-27 (LCLT…MDIL), 162-182 (VVIS…PGLL), 192-212 (CMAV…FIVL), 244-264 (MILM…FVKL), 278-298 (YAIV…DVAT), and 299-319 (MMLM…LAWM).

This sequence belongs to the TatC family. Forms a complex with TatA.

The protein localises to the cell membrane. In terms of biological role, part of the twin-arginine translocation (Tat) system that transports large folded proteins containing a characteristic twin-arginine motif in their signal peptide across membranes. The chain is Sec-independent protein translocase protein TatC from Akkermansia muciniphila (strain ATCC BAA-835 / DSM 22959 / JCM 33894 / BCRC 81048 / CCUG 64013 / CIP 107961 / Muc).